A 1066-amino-acid chain; its full sequence is FHIP family protein GI14169 (1066 aa).

Residues 1 to 11 (MSWLRTSPLRQ) are compositionally biased toward polar residues. The interval 1–35 (MSWLRTSPLRQSLTRSGSSSGNGSSGTATTMRQRP) is disordered. Positions 12 to 30 (SLTRSGSSSGNGSSGTATT) are enriched in low complexity. Serine 500 carries the post-translational modification Phosphoserine. The segment at 651-682 (GIDVTTTTTASASDTDLEHNNNSSSISSGRRD) is disordered. Residues 655-678 (TTTTTASASDTDLEHNNNSSSISS) show a composition bias toward low complexity. Serine 820 is modified (phosphoserine). Disordered regions lie at residues 821 to 913 (PLHQ…GNSA) and 935 to 1007 (SGGE…TGNF). A compositionally biased stretch (low complexity) spans 822 to 855 (LHQQLQHQQQHQQLAQTNSHTQQQQQQQQQQAQQ). Residues 856-874 (RSTYATLSAATPVQASPTS) are compositionally biased toward polar residues. Over residues 890 to 913 (SRSITSMFSRRSTSSTPASNGNSA) the composition is skewed to low complexity. Over residues 947–971 (QDSTRGNTCETSLSTAPRQEPQTNV) the composition is skewed to polar residues. Over residues 972-997 (GSSSNSSIGSSTQTLSGTHSSSTLHG) the composition is skewed to low complexity.

It belongs to the FHIP family.

The protein is FHIP family protein GI14169 of Drosophila mojavensis (Fruit fly).